The primary structure comprises 513 residues: GMP synthase [glutamine-hydrolyzing] (513 aa).

The 190-residue stretch at 9–198 folds into the Glutamine amidotransferase type-1 domain; sequence MILVLDFGSQ…VRRICDCTGE (190 aa). C86 functions as the Nucleophile in the catalytic mechanism. Catalysis depends on residues H172 and E174. In terms of domain architecture, GMPS ATP-PPase spans 199 to 388; the sequence is WTMENFIDLE…LGIPEHLVWR (190 aa). Position 226-232 (226-232) interacts with ATP; sequence SGGVDSS.

In terms of assembly, homodimer.

The catalysed reaction is XMP + L-glutamine + ATP + H2O = GMP + L-glutamate + AMP + diphosphate + 2 H(+). It participates in purine metabolism; GMP biosynthesis; GMP from XMP (L-Gln route): step 1/1. Functionally, catalyzes the synthesis of GMP from XMP. This is GMP synthase [glutamine-hydrolyzing] from Staphylococcus carnosus (strain TM300).